The following is a 375-amino-acid chain: MQKLQIFVYIYLFMLLVAGPVDLNENSEQKENVEKKGLCNACLWRQNNKSSRLEAIKIQILSKLRLETAPNISKDAIRQLLPKAPPLRELIDQYDVQRDDSSDGSLEDDDYHVTTETVITMPTESDLLAEVQEKPKCCFFKFSSKIQHNKVVKAQLWIYLRPVKTPTTVFVQILRLIKPMKDGTRYTGIRSLKLDMNPGTGIWQSIDVKTVLQNWLKQPESNLGIEIKALDENGHDLAVTFPEPGEEGLNPFLEVKVTDTPKRSRRDFGLDCDEHSTESRCCRYPLTVDFEAFGWDWIIAPKRYKANYCSGECEFLFLQKYPHTHLVHQANPKGSAGPCCTPTKMSPINMLYFNGKEQIIYGKIPGMVVDRCGCS.

The signal sequence occupies residues 1 to 23 (MQKLQIFVYIYLFMLLVAGPVDL). A propeptide spanning residues 24–266 (NENSEQKENV…VTDTPKRSRR (243 aa)) is cleaved from the precursor. N-linked (GlcNAc...) asparagine glycosylation is found at Asn-48 and Asn-71. 4 disulfide bridges follow: Cys-272/Cys-282, Cys-281/Cys-340, Cys-309/Cys-372, and Cys-313/Cys-374.

This sequence belongs to the TGF-beta family. In terms of assembly, homodimer; disulfide-linked. Interacts with WFIKKN2, leading to inhibit its activity. Interacts with FSTL3. Post-translationally, synthesized as large precursor molecule that undergoes proteolytic cleavage to generate an N-terminal propeptide and a disulfide linked C-terminal dimer, which is the biologically active molecule. The circulating form consists of a latent complex of the C-terminal dimer and other proteins, including its propeptide, which maintain the C-terminal dimer in a latent, inactive state. Ligand activation requires additional cleavage of the prodomain by a tolloid-like metalloproteinase.

The protein resides in the secreted. Acts specifically as a negative regulator of skeletal muscle growth. This is Growth/differentiation factor 8 (MSTN) from Ovis aries (Sheep).